Consider the following 323-residue polypeptide: tRNA dimethylallyltransferase (323 aa).

12-19 is a binding site for ATP; it reads GPTAAGKT. A substrate-binding site is contributed by 14–19; the sequence is TAAGKT. Interaction with substrate tRNA stretches follow at residues 37-40 and 161-165; these read DSAL and QRLIR.

Belongs to the IPP transferase family. As to quaternary structure, monomer. It depends on Mg(2+) as a cofactor.

The enzyme catalyses adenosine(37) in tRNA + dimethylallyl diphosphate = N(6)-dimethylallyladenosine(37) in tRNA + diphosphate. Catalyzes the transfer of a dimethylallyl group onto the adenine at position 37 in tRNAs that read codons beginning with uridine, leading to the formation of N6-(dimethylallyl)adenosine (i(6)A). The protein is tRNA dimethylallyltransferase of Pseudomonas putida (strain ATCC 700007 / DSM 6899 / JCM 31910 / BCRC 17059 / LMG 24140 / F1).